Reading from the N-terminus, the 298-residue chain is Transcription factor bHLH114 (298 aa).

The stretch at 117–149 (LDHEIRNHKSSKEQITQDYKNLTSKRSEELEEN) forms a coiled coil. Residues 126–154 (SSKEQITQDYKNLTSKRSEELEENSDEYS) are disordered. Positions 129–140 (EQITQDYKNLTS) are enriched in polar residues. The region spanning 163 to 212 (LETLSPLPSFKVRKEKLGDRITALQQLVSPFGKTDTASVLNEAVEYIKFL) is the bHLH domain.

Homodimer. As to expression, differentiating root endodermis.

It localises to the nucleus. The sequence is that of Transcription factor bHLH114 (BHLH114) from Arabidopsis thaliana (Mouse-ear cress).